The primary structure comprises 704 residues: Elongation factor G 1 (704 aa).

The tr-type G domain occupies 8–291; the sequence is ERYRNIGISA…AVIDYLPSPA (284 aa). GTP contacts are provided by residues 17-24, 88-92, and 142-145; these read AHIDAGKT, DTPGH, and NKMD.

It belongs to the TRAFAC class translation factor GTPase superfamily. Classic translation factor GTPase family. EF-G/EF-2 subfamily.

Its subcellular location is the cytoplasm. Functionally, catalyzes the GTP-dependent ribosomal translocation step during translation elongation. During this step, the ribosome changes from the pre-translocational (PRE) to the post-translocational (POST) state as the newly formed A-site-bound peptidyl-tRNA and P-site-bound deacylated tRNA move to the P and E sites, respectively. Catalyzes the coordinated movement of the two tRNA molecules, the mRNA and conformational changes in the ribosome. The sequence is that of Elongation factor G 1 from Burkholderia thailandensis (strain ATCC 700388 / DSM 13276 / CCUG 48851 / CIP 106301 / E264).